Here is a 132-residue protein sequence, read N- to C-terminus: MYQAIPYNANRAWPAASRPATAAAAPPPPPPRGEEEEVRRAVAECPVVVVGRSGCCLSHVVKRLLQGLGVNPAVHEVAGEAELAGVVAGGGGVALPAVFVGGRLLGGLDRLMAVHISGELVPILKEAGALWL.

A disordered region spans residues 16–38 (ASRPATAAAAPPPPPPRGEEEEV). Residues 35-131 (EEEVRRAVAE…PILKEAGALW (97 aa)) enclose the Glutaredoxin domain. Cys55 provides a ligand contact to [2Fe-2S] cluster. The Responsive for interaction with TGA factors motif lies at 129-132 (ALWL).

Belongs to the glutaredoxin family. CC-type subfamily.

It localises to the cytoplasm. It is found in the nucleus. May only reduce GSH-thiol disulfides, but not protein disulfides. In Oryza sativa subsp. japonica (Rice), this protein is Monothiol glutaredoxin-S9 (GRXS9).